A 203-amino-acid chain; its full sequence is Thymidylate kinase (203 aa).

Position 10 to 17 (Gly10 to Ser17) interacts with ATP.

Belongs to the thymidylate kinase family.

It carries out the reaction dTMP + ATP = dTDP + ADP. Phosphorylation of dTMP to form dTDP in both de novo and salvage pathways of dTTP synthesis. This chain is Thymidylate kinase, found in Brachyspira hyodysenteriae (strain ATCC 49526 / WA1).